Reading from the N-terminus, the 196-residue chain is uncharacterized protein (196 aa).

Residues 1 to 10 (MPGMVPPHVP) show a composition bias toward pro residues. Disordered regions lie at residues 1–118 (MPGM…EGSG) and 176–196 (TEQAAPPVCPAPASRRLSAPG). The span at 25–45 (PVAPQVPSPGGAPGQGPYPYS) shows a compositional bias: low complexity. Residues 54-69 (LDTSGKNLTEQNSYSN) show a composition bias toward polar residues.

This is an uncharacterized protein from Homo sapiens (Human).